We begin with the raw amino-acid sequence, 142 residues long: Large ribosomal subunit protein uL13 (142 aa).

The protein belongs to the universal ribosomal protein uL13 family. In terms of assembly, part of the 50S ribosomal subunit.

Its function is as follows. This protein is one of the early assembly proteins of the 50S ribosomal subunit, although it is not seen to bind rRNA by itself. It is important during the early stages of 50S assembly. The chain is Large ribosomal subunit protein uL13 from Pseudomonas aeruginosa (strain LESB58).